A 200-amino-acid chain; its full sequence is Transcriptional repressor NrdR (200 aa).

Residues 3–34 fold into a zinc finger; that stretch reads CPFCQNPDTKVIDTRISDDGHSIRRRRECPNC. An ATP-cone domain is found at 46-136; it reads LLVKKRSGNV…VYQNFEDLED (91 aa).

Belongs to the NrdR family. Zn(2+) serves as cofactor.

Functionally, negatively regulates transcription of bacterial ribonucleotide reductase nrd genes and operons by binding to NrdR-boxes. This is Transcriptional repressor NrdR from Bifidobacterium animalis subsp. lactis (strain AD011).